A 331-amino-acid polypeptide reads, in one-letter code: Protein RecA (331 aa).

66–73 (GPESSGKT) is an ATP binding site.

Belongs to the RecA family.

The protein resides in the cytoplasm. Its function is as follows. Can catalyze the hydrolysis of ATP in the presence of single-stranded DNA, the ATP-dependent uptake of single-stranded DNA by duplex DNA, and the ATP-dependent hybridization of homologous single-stranded DNAs. It interacts with LexA causing its activation and leading to its autocatalytic cleavage. This is Protein RecA from Acholeplasma laidlawii.